We begin with the raw amino-acid sequence, 357 residues long: Dihydroorotate dehydrogenase (quinone) (357 aa).

FMN-binding positions include 66–70 (AGFDK) and Thr90. Lys70 contacts substrate. 115–119 (NRMGF) serves as a coordination point for substrate. Asn143 and Asn176 together coordinate FMN. Asn176 contacts substrate. The active-site Nucleophile is Ser179. A substrate-binding site is contributed by Asn181. Residues Lys212 and Thr240 each coordinate FMN. Residue 241–242 (NT) participates in substrate binding. Residues Gly264, Gly293, and 314-315 (YT) contribute to the FMN site.

Belongs to the dihydroorotate dehydrogenase family. Type 2 subfamily. Monomer. It depends on FMN as a cofactor.

It is found in the cell membrane. The enzyme catalyses (S)-dihydroorotate + a quinone = orotate + a quinol. The protein operates within pyrimidine metabolism; UMP biosynthesis via de novo pathway; orotate from (S)-dihydroorotate (quinone route): step 1/1. Catalyzes the conversion of dihydroorotate to orotate with quinone as electron acceptor. In Mycobacterium bovis (strain BCG / Pasteur 1173P2), this protein is Dihydroorotate dehydrogenase (quinone).